The chain runs to 518 residues: Pumilio homolog 14 (518 aa).

Disordered stretches follow at residues 26–46 (TMASSSSQPQPISSPFHQPEN) and 77–114 (VGQNGDSIHLPRRTNQVFTGSSSGGAGDDNGYLLPPMG). Residues 29–44 (SSSSQPQPISSPFHQP) are compositionally biased toward low complexity. The PUM-HD domain maps to 178–518 (YTNRFGYEGY…GNKVLEKLNI (341 aa)). The stretch at 206–235 (SAFAKDKEMSERLGMSIFQGTKETVDAIYN) is one Pumilio 1; degenerate repeat. 7 Pumilio repeats span residues 236 to 271 (GLIGDICELMVDPYGSDVVQLLMRRCSSEQIVQLVD), 275 to 313 (QQMFQFVNICIDSLGTNAIQVLLTCINERAKDQIPRIVD), 314 to 348 (VVRTVALQLSKSNHAIFVILACFRLFPLHCRLLLE), 349 to 387 (LIVQNCHQIAIDQHGCCLLQLCFNKDRVPNLEIRQRLIM), 388 to 423 (EAIANALRLCLNCYGNYVVQYIVELNNRYLIDALVR), 424 to 459 (QLIGNYAHLARNKYGSHAVQKLLKLRWIDSRVIVID), and 460 to 494 (LLREIDTLLLDPFGNYVIQTAWFVSKDDVRRMLRY).

The protein resides in the cytoplasm. The protein localises to the nucleus. Functionally, sequence-specific RNA-binding protein that regulates translation and mRNA stability by binding the 3'-UTR of target mRNAs. This is Pumilio homolog 14 (APUM14) from Arabidopsis thaliana (Mouse-ear cress).